A 143-amino-acid polypeptide reads, in one-letter code: Ribonuclease H (143 aa).

The region spanning 1–136 (MQEIEIFCDG…CDSLAKLEAQ (136 aa)) is the RNase H type-1 domain. 4 residues coordinate Mg(2+): Asp9, Glu47, Asp69, and Asp128.

It belongs to the RNase H family. Monomer. Mg(2+) serves as cofactor.

The protein resides in the cytoplasm. The enzyme catalyses Endonucleolytic cleavage to 5'-phosphomonoester.. In terms of biological role, endonuclease that specifically degrades the RNA of RNA-DNA hybrids. The polypeptide is Ribonuclease H (Helicobacter acinonychis (strain Sheeba)).